The chain runs to 725 residues: Polyribonucleotide nucleotidyltransferase (725 aa).

Positions 487 and 493 each coordinate Mg(2+). The KH domain occupies 554–613; the sequence is PRIETMQIPTDKIREVIGTGGKVIREIVEKTGAKIDIQDTGVIKIASSDAKAIKAAYNWI. The S1 motif domain maps to 623-691; the sequence is GMIYDGTVVK…ERGKIRLSMK (69 aa). The tract at residues 697-725 is disordered; that stretch reads TGEDITEKLKAEREADRNRERQARQSAGE. Residues 701–719 are compositionally biased toward basic and acidic residues; it reads ITEKLKAEREADRNRERQA.

It belongs to the polyribonucleotide nucleotidyltransferase family. Mg(2+) is required as a cofactor.

The protein resides in the cytoplasm. It carries out the reaction RNA(n+1) + phosphate = RNA(n) + a ribonucleoside 5'-diphosphate. Functionally, involved in mRNA degradation. Catalyzes the phosphorolysis of single-stranded polyribonucleotides processively in the 3'- to 5'-direction. In Methylobacterium nodulans (strain LMG 21967 / CNCM I-2342 / ORS 2060), this protein is Polyribonucleotide nucleotidyltransferase.